We begin with the raw amino-acid sequence, 132 residues long: Small ribosomal subunit protein uS8 (132 aa).

The protein belongs to the universal ribosomal protein uS8 family. As to quaternary structure, part of the 30S ribosomal subunit. Contacts proteins S5 and S12.

Its function is as follows. One of the primary rRNA binding proteins, it binds directly to 16S rRNA central domain where it helps coordinate assembly of the platform of the 30S subunit. The chain is Small ribosomal subunit protein uS8 from Flavobacterium psychrophilum (strain ATCC 49511 / DSM 21280 / CIP 103535 / JIP02/86).